The sequence spans 336 residues: Calcium uniporter regulatory subunit MCUb, mitochondrial (336 aa).

A mitochondrion-targeting transit peptide spans 1–35; the sequence is MLQRGLWPWRTRLLPTPGTWRPARPWPLPPPPQVL. A coiled-coil region spans residues 179-210; it reads ESQKKREHHLLEKIDHLKEQLQPLEQVKAGIE. 2 helical membrane-spanning segments follow: residues 220 to 240 and 250 to 270; these read LLWA…WLTW and PVTY…FIVT. Residues 297 to 323 are a coiled coil; sequence FDVQQYNKLKEDLAKAKESLKQARHSL.

The protein belongs to the MCU (TC 1.A.77) family. Homooligomer. Associates with the uniplex complex, composed of MCU, MICU1, MICU2 and EMRE/SMDT1, inhibiting its activity.

The protein resides in the mitochondrion inner membrane. In terms of biological role, negative regulator of the mitochondrial calcium uniporter (MCU), a channel that mediates calcium uptake into the mitochondrial matrix. MCUB is required to limit mitochondrial calcium overload during stress. Acts as a dominant-negative regulator that displaces MCU from the functional uniplex complex and thereby decreases the association of calcium sensors MICU1 and MICU2, preventing channel gating. Mitochondrial calcium homeostasis plays key roles in mitochondrial metabolism. Acts as an important regulator of mitochondrial metabolism in response to stress in muscle cells: induced in response to fasting, leading to restrict mitochondrial calcium uptake, resulting in reprogramming of mitochondria toward fatty acid oxidation preference. Acts as a regulator of macrophage polarization during skeletal muscle regeneration: inhibition of mitochondrial calcium uptake drives differentiation of macrophages with anti-inflammatory profile, promoting the differentiation and fusion of satellite cells. The protein is Calcium uniporter regulatory subunit MCUb, mitochondrial of Homo sapiens (Human).